A 358-amino-acid chain; its full sequence is Heavy metal-associated isoprenylated plant protein 37 (358 aa).

Residues 12 to 75 enclose the HMA domain; sequence IQTFSLRVNI…KLVKAGKHAE (64 aa). Positions 23 and 26 each coordinate a metal cation. Disordered regions lie at residues 100–194 and 332–358; these read QKGQ…QNTQ and QQQSSHSHATNMSSEEDAGNNNSCNIM. The span at 128-141 shows a compositional bias: acidic residues; that stretch reads AEEDGDGSEEEDGD. Low complexity predominate over residues 148–181; that stretch reads ANQQQQQNVVNAKKNSGGAAMNNGNNGVNAASKK. Polar residues-rich tracts occupy residues 184-194 and 339-358; these read QKQSNHNQNTQ and HATNMSSEEDAGNNNSCNIM. C355 is modified (cysteine methyl ester). A lipid anchor (S-farnesyl cysteine) is attached at C355. Positions 356-358 are cleaved as a propeptide — removed in mature form; it reads NIM.

It belongs to the HIPP family.

Its function is as follows. Heavy-metal-binding protein. This Arabidopsis thaliana (Mouse-ear cress) protein is Heavy metal-associated isoprenylated plant protein 37.